Consider the following 374-residue polypeptide: Protein RecA (374 aa).

Residue G66–T73 coordinates ATP. The interval K326–S374 is disordered. Residues T338–S374 show a composition bias toward low complexity.

Belongs to the RecA family.

The protein localises to the cytoplasm. In terms of biological role, can catalyze the hydrolysis of ATP in the presence of single-stranded DNA, the ATP-dependent uptake of single-stranded DNA by duplex DNA, and the ATP-dependent hybridization of homologous single-stranded DNAs. It interacts with LexA causing its activation and leading to its autocatalytic cleavage. In Streptomyces coelicolor (strain ATCC BAA-471 / A3(2) / M145), this protein is Protein RecA.